Reading from the N-terminus, the 148-residue chain is Short form salivary protein D7S1 (148 aa).

The signal sequence occupies residues 1–21; it reads MKQNVFFLIAYFSLVFCMCNA. Disulfide bonds link C28/C61, C41/C147, and C103/C119.

Belongs to the PBP/GOBP family. In terms of tissue distribution, female salivary gland.

Its subcellular location is the secreted. In contrast to the related D7 salivary proteins that can bind biogenic amines, does not bind serotonin. The polypeptide is Short form salivary protein D7S1 (Aedes aegypti (Yellowfever mosquito)).